Consider the following 715-residue polypeptide: Fatty acid oxidation complex subunit alpha (715 aa).

Residues 1–190 (MIYEGKAITV…KVGAVDAVVA (190 aa)) are enoyl-CoA hydratase/isomerase. A substrate-binding site is contributed by Asp297. The 3-hydroxyacyl-CoA dehydrogenase stretch occupies residues 312–715 (HDVKQAAVLG…MAKNGQRFFN (404 aa)). Residues Met325, Asp344, 401 to 403 (VVE), Lys408, and Ser430 contribute to the NAD(+) site. His451 acts as the For 3-hydroxyacyl-CoA dehydrogenase activity in catalysis. Residue Asn454 coordinates NAD(+). Substrate is bound by residues Asn501 and Tyr660.

In the N-terminal section; belongs to the enoyl-CoA hydratase/isomerase family. This sequence in the C-terminal section; belongs to the 3-hydroxyacyl-CoA dehydrogenase family. In terms of assembly, heterotetramer of two alpha chains (FadB) and two beta chains (FadA).

It catalyses the reaction a (3S)-3-hydroxyacyl-CoA + NAD(+) = a 3-oxoacyl-CoA + NADH + H(+). It carries out the reaction a (3S)-3-hydroxyacyl-CoA = a (2E)-enoyl-CoA + H2O. The enzyme catalyses a 4-saturated-(3S)-3-hydroxyacyl-CoA = a (3E)-enoyl-CoA + H2O. The catalysed reaction is (3S)-3-hydroxybutanoyl-CoA = (3R)-3-hydroxybutanoyl-CoA. It catalyses the reaction a (3Z)-enoyl-CoA = a 4-saturated (2E)-enoyl-CoA. It carries out the reaction a (3E)-enoyl-CoA = a 4-saturated (2E)-enoyl-CoA. It participates in lipid metabolism; fatty acid beta-oxidation. Its function is as follows. Involved in the aerobic and anaerobic degradation of long-chain fatty acids via beta-oxidation cycle. Catalyzes the formation of 3-oxoacyl-CoA from enoyl-CoA via L-3-hydroxyacyl-CoA. It can also use D-3-hydroxyacyl-CoA and cis-3-enoyl-CoA as substrate. The chain is Fatty acid oxidation complex subunit alpha from Pseudomonas entomophila (strain L48).